Here is an 820-residue protein sequence, read N- to C-terminus: Mediator of RNA polymerase II transcription subunit 16 (820 aa).

3 WD repeats span residues 74-114 (SNKY…SEWK), 621-665 (RSFM…PVFS), and 757-811 (SNDN…KCRC).

The protein belongs to the Mediator complex subunit 16 family. As to quaternary structure, component of the Mediator complex.

Its subcellular location is the nucleus. Functionally, component of the Mediator complex, a coactivator involved in the regulated transcription of nearly all RNA polymerase II-dependent genes. Mediator functions as a bridge to convey information from gene-specific regulatory proteins to the basal RNA polymerase II transcription machinery. Mediator is recruited to promoters by direct interactions with regulatory proteins and serves as a scaffold for the assembly of a functional preinitiation complex with RNA polymerase II and the general transcription factors. This chain is Mediator of RNA polymerase II transcription subunit 16 (MED16), found in Aedes aegypti (Yellowfever mosquito).